Here is a 408-residue protein sequence, read N- to C-terminus: MSLSVTRENFDEWMVPVYVPAPFIPVRGEGSRLWDQQGKEYIDFAGGIAVNALGHAHPALREALNEQANRFWHTGNGYTNEPALRLAKKLIDATFAERVFFCNSGAEANEAALKLARKYAHDRVGNHKSGIVAFKNAFHGRTLFTVSAGGQPTYSQDFAPLPPDIRHAAYNDLNSASALIDDNTCAVIVEPVQGEGGVIPATKAFLQGLRELCDRHQALLIFDEVQTGVGRTGELYAYMHYGVTPDILTTAKALGGGFPIGAMLTTQDYASVMTPGTHGTTYGGNPLATAVAGKVLDIINTPEMQNGVRQRHDAFIERLNTINARFGMFSEIRGLGLLLGCVLQTEFAGKAKLIAQEAAKAGVMVLIAGGDVVRFAPALNVSDEEIATGLDRFALACERLQTGGASCG.

K252 carries the post-translational modification N6-(pyridoxal phosphate)lysine.

Belongs to the class-III pyridoxal-phosphate-dependent aminotransferase family. AstC subfamily. Pyridoxal 5'-phosphate is required as a cofactor.

The enzyme catalyses N(2)-succinyl-L-ornithine + 2-oxoglutarate = N-succinyl-L-glutamate 5-semialdehyde + L-glutamate. Its pathway is amino-acid degradation; L-arginine degradation via AST pathway; L-glutamate and succinate from L-arginine: step 3/5. In terms of biological role, catalyzes the transamination of N(2)-succinylornithine and alpha-ketoglutarate into N(2)-succinylglutamate semialdehyde and glutamate. Can also act as an acetylornithine aminotransferase. The sequence is that of Succinylornithine transaminase from Salmonella enteritidis PT4 (strain P125109).